The following is a 391-amino-acid chain: Phosphoglycerate kinase (391 aa).

Substrate contacts are provided by residues 21-23 (DLN), R36, 59-62 (HLGR), R113, and R146. ATP-binding positions include K197, E319, and 345–348 (GGDT).

Belongs to the phosphoglycerate kinase family. In terms of assembly, monomer.

It is found in the cytoplasm. The catalysed reaction is (2R)-3-phosphoglycerate + ATP = (2R)-3-phospho-glyceroyl phosphate + ADP. Its pathway is carbohydrate degradation; glycolysis; pyruvate from D-glyceraldehyde 3-phosphate: step 2/5. The sequence is that of Phosphoglycerate kinase from Xanthomonas oryzae pv. oryzae (strain PXO99A).